The primary structure comprises 812 residues: Probable beta-glucosidase D (812 aa).

The first 18 residues, 1 to 18 (MRVPSLSVLSFLLGTALA), serve as a signal peptide directing secretion. N-linked (GlcNAc...) asparagine glycans are attached at residues N53 and N188. The interval 186–248 (ETNRTGGMGG…GMGGGMAGSS (63 aa)) is disordered. The segment covering 191-207 (GGMGGGGGAPGGGGMGR) has biased composition (gly residues). The span at 211–225 (FSSSVPGGMSPTSSA) shows a compositional bias: polar residues. The segment covering 236-245 (GGSGMGGGMA) has biased composition (gly residues). N296 carries N-linked (GlcNAc...) asparagine glycosylation. D324 is an active-site residue. N360, N384, N422, N501, N592, and N646 each carry an N-linked (GlcNAc...) asparagine glycan.

This sequence belongs to the glycosyl hydrolase 3 family.

The protein localises to the secreted. It catalyses the reaction Hydrolysis of terminal, non-reducing beta-D-glucosyl residues with release of beta-D-glucose.. It participates in glycan metabolism; cellulose degradation. In terms of biological role, beta-glucosidases are one of a number of cellulolytic enzymes involved in the degradation of cellulosic biomass. Catalyzes the last step releasing glucose from the inhibitory cellobiose. In Emericella nidulans (strain FGSC A4 / ATCC 38163 / CBS 112.46 / NRRL 194 / M139) (Aspergillus nidulans), this protein is Probable beta-glucosidase D (bglD).